Reading from the N-terminus, the 320-residue chain is Cytochrome f (320 aa).

The first 35 residues, Met-1–Ala-35, serve as a signal peptide directing secretion. Heme is bound by residues Tyr-36, Cys-56, Cys-59, and His-60. The chain crosses the membrane as a helical span at residues Val-286–Lys-306.

It belongs to the cytochrome f family. As to quaternary structure, the 4 large subunits of the cytochrome b6-f complex are cytochrome b6, subunit IV (17 kDa polypeptide, petD), cytochrome f and the Rieske protein, while the 4 small subunits are PetG, PetL, PetM and PetN. The complex functions as a dimer. Heme serves as cofactor.

The protein resides in the plastid. Its subcellular location is the chloroplast thylakoid membrane. Functionally, component of the cytochrome b6-f complex, which mediates electron transfer between photosystem II (PSII) and photosystem I (PSI), cyclic electron flow around PSI, and state transitions. In Saccharum hybrid (Sugarcane), this protein is Cytochrome f.